A 340-amino-acid polypeptide reads, in one-letter code: Anthranilate phosphoribosyltransferase (340 aa).

5-phospho-alpha-D-ribose 1-diphosphate contacts are provided by residues G80, 83–84 (GD), T88, 90–93 (NIST), 108–116 (KHGNRAMSS), and S120. G80 lines the anthranilate pocket. S92 contacts Mg(2+). Anthranilate is bound at residue N111. Anthranilate is bound at residue R166. 2 residues coordinate Mg(2+): D225 and E226.

This sequence belongs to the anthranilate phosphoribosyltransferase family. In terms of assembly, homodimer. Requires Mg(2+) as cofactor.

The catalysed reaction is N-(5-phospho-beta-D-ribosyl)anthranilate + diphosphate = 5-phospho-alpha-D-ribose 1-diphosphate + anthranilate. Its pathway is amino-acid biosynthesis; L-tryptophan biosynthesis; L-tryptophan from chorismate: step 2/5. Its function is as follows. Catalyzes the transfer of the phosphoribosyl group of 5-phosphorylribose-1-pyrophosphate (PRPP) to anthranilate to yield N-(5'-phosphoribosyl)-anthranilate (PRA). The protein is Anthranilate phosphoribosyltransferase of Chloroflexus aggregans (strain MD-66 / DSM 9485).